We begin with the raw amino-acid sequence, 398 residues long: Dual-specificity RNA methyltransferase RlmN (398 aa).

Residue glutamate 100 is the Proton acceptor of the active site. A Radical SAM core domain is found at 106–345 (DGDRGTLCVS…TTVRTTRGDD (240 aa)). A disulfide bridge connects residues cysteine 113 and cysteine 350. [4Fe-4S] cluster is bound by residues cysteine 120, cysteine 124, and cysteine 127. Residues 174–175 (GE), serine 206, 228–230 (SLH), and asparagine 307 each bind S-adenosyl-L-methionine. Cysteine 350 serves as the catalytic S-methylcysteine intermediate.

The protein belongs to the radical SAM superfamily. RlmN family. It depends on [4Fe-4S] cluster as a cofactor.

It localises to the cytoplasm. The enzyme catalyses adenosine(2503) in 23S rRNA + 2 reduced [2Fe-2S]-[ferredoxin] + 2 S-adenosyl-L-methionine = 2-methyladenosine(2503) in 23S rRNA + 5'-deoxyadenosine + L-methionine + 2 oxidized [2Fe-2S]-[ferredoxin] + S-adenosyl-L-homocysteine. The catalysed reaction is adenosine(37) in tRNA + 2 reduced [2Fe-2S]-[ferredoxin] + 2 S-adenosyl-L-methionine = 2-methyladenosine(37) in tRNA + 5'-deoxyadenosine + L-methionine + 2 oxidized [2Fe-2S]-[ferredoxin] + S-adenosyl-L-homocysteine. Its function is as follows. Specifically methylates position 2 of adenine 2503 in 23S rRNA and position 2 of adenine 37 in tRNAs. m2A2503 modification seems to play a crucial role in the proofreading step occurring at the peptidyl transferase center and thus would serve to optimize ribosomal fidelity. The polypeptide is Dual-specificity RNA methyltransferase RlmN (Saccharophagus degradans (strain 2-40 / ATCC 43961 / DSM 17024)).